Here is a 515-residue protein sequence, read N- to C-terminus: Histidine ammonia-lyase (515 aa).

The segment at residues Ala146–Gly148 is a cross-link (5-imidazolinone (Ala-Gly)). Position 147 is a 2,3-didehydroalanine (Ser) (Ser147).

The protein belongs to the PAL/histidase family. Post-translationally, contains an active site 4-methylidene-imidazol-5-one (MIO), which is formed autocatalytically by cyclization and dehydration of residues Ala-Ser-Gly.

It localises to the cytoplasm. The catalysed reaction is L-histidine = trans-urocanate + NH4(+). It functions in the pathway amino-acid degradation; L-histidine degradation into L-glutamate; N-formimidoyl-L-glutamate from L-histidine: step 1/3. This Ralstonia nicotianae (strain ATCC BAA-1114 / GMI1000) (Ralstonia solanacearum) protein is Histidine ammonia-lyase (hutH).